Consider the following 467-residue polypeptide: Uronate isomerase (467 aa).

This sequence belongs to the metallo-dependent hydrolases superfamily. Uronate isomerase family.

It catalyses the reaction D-glucuronate = D-fructuronate. It carries out the reaction aldehydo-D-galacturonate = keto-D-tagaturonate. It participates in carbohydrate metabolism; pentose and glucuronate interconversion. This is Uronate isomerase from Mannheimia succiniciproducens (strain KCTC 0769BP / MBEL55E).